Here is a 105-residue protein sequence, read N- to C-terminus: MLLSKITFFERFEHDILSGTKTITLRDEAESHVITGQILPVSTFETDRWFCDIQIIDVTPVKLTELTEVHAKQENMTLPQLCDVIAEIYPGLEQLFMIRFRILSQ.

The ASCH domain occupies 7–93; the sequence is TFFERFEHDI…VIAEIYPGLE (87 aa). The active-site Proton acceptor is the K21. The active-site Nucleophile is T24. E74 serves as the catalytic Proton donor.

This sequence belongs to the N(4)-acetylcytidine amidohydrolase family.

The enzyme catalyses N(4)-acetylcytidine + H2O = cytidine + acetate + H(+). It catalyses the reaction N(4)-acetyl-2'-deoxycytidine + H2O = 2'-deoxycytidine + acetate + H(+). It carries out the reaction N(4)-acetylcytosine + H2O = cytosine + acetate + H(+). Its function is as follows. Catalyzes the hydrolysis of N(4)-acetylcytidine (ac4C). This Shewanella baltica (strain OS223) protein is N(4)-acetylcytidine amidohydrolase.